A 412-amino-acid chain; its full sequence is Divalent metal cation transporter MntH (412 aa).

Helical transmembrane passes span 19–39, 46–66, 94–114, 122–142, 156–176, 196–216, 241–261, 290–310, 322–342, 348–368, and 392–412; these read LALM…GNFA, ASFG…AMLI, VWFY…AEFI, LILG…TFLI, VIGG…FFSQ, AVFL…IYLH, IAMT…AAAF, IFGL…TLAG, IPLW…ILMG, ILVM…VPLL, and AIVV…ALGL.

This sequence belongs to the NRAMP family.

It is found in the cell inner membrane. H(+)-stimulated, divalent metal cation uptake system. In Cronobacter sakazakii (strain ATCC BAA-894) (Enterobacter sakazakii), this protein is Divalent metal cation transporter MntH.